The chain runs to 615 residues: Sodium-coupled neutral amino acid transporter 9 homolog (615 aa).

The Cytoplasmic segment spans residues 1–165 (MPPFFAEFTE…LKDVSGKQGS (165 aa)). A disordered region spans residues 41-65 (VDDNDTDPLLDDEPPRRLPPAGGVP). Acidic residues predominate over residues 42–52 (DDNDTDPLLDD). Residues 166–186 (IVTIFSIWNTMMGTSLLAMPW) traverse the membrane as a helical segment. The segment at 175–180 (TMMGTS) is important for arginine binding and amino acid transport. The Lumenal segment spans residues 187–192 (ALQQAG). A helical membrane pass occupies residues 193 to 213 (LVLGIIIMLSMAAICFYTAYI). The Cytoplasmic segment spans residues 214-246 (VIESPKRLQDLSVDPLLAEFSDVCKSLFGRIGE). The chain crosses the membrane as a helical span at residues 247-273 (YCAVVFSVCVLIGGVIVYWVLMSNFLY). Over 274–341 (YTGAVVYESM…TGDDSWSFDK (68 aa)) the chain is Lumenal. 2 N-linked (GlcNAc...) asparagine glycosylation sites follow: N286 and N295. C304 and C478 are joined by a disulfide. A helical membrane pass occupies residues 342 to 358 (FWTLRGTVPIYLAFALF). Residues 359 to 367 (PLMNFKSPT) are Cytoplasmic-facing. A helical membrane pass occupies residues 368-392 (FFTKFNVLGTISVMYLLMFVFSKLL). Residues 393-413 (ECGVNMDFSNPKSIHYVQLAN) lie on the Lumenal side of the membrane. The helical transmembrane segment at 414–434 (MHFPALSGTLTLSYFIHNAVL) threads the bilayer. Topologically, residues 435-451 (TILRNQKHPENNARDLS) are cytoplasmic. The helical transmembrane segment at 452–472 (IGYCLVAFCYVFIGFTFFAAF) threads the bilayer. The Lumenal segment spans residues 473-491 (PVQRSCISDNFLNNFGAGD). Residues 492–512 (VLSSTARLFLLFQMITVLPLL) form a helical membrane-spanning segment. The Cytoplasmic portion of the chain corresponds to 513-533 (MFLVRSQLFYAIFGQTWPGAI). The chain crosses the membrane as a helical span at residues 534–554 (RVIILNVLLIAVAVGFATFYP). Topologically, residues 555 to 561 (NVGSILR) are lumenal. A helical transmembrane segment spans residues 562–582 (YVGSISGLVYVFALPAMVYIK). Over 583-594 (QSEAAGTLTPMK) the chain is Cytoplasmic. Residues 595–615 (KYAHYGIIVIGVANLIAQFVI) form a helical membrane-spanning segment.

It belongs to the amino acid/polyamine transporter 2 family. SLC38A9 subfamily.

The protein resides in the lysosome membrane. It localises to the late endosome membrane. Amino acid transport is sodium-dependent. Transport of leucine, tyrosine and phenylalanine is increased by arginine binding. Lysosomal amino acid transporter involved in the activation of mTORC1 in response to amino acid levels. Probably acts as an amino acid sensor of the Rag GTPases and Ragulator complexes, 2 complexes involved in amino acid sensing and activation of mTORC1, a signaling complex promoting cell growth in response to growth factors, energy levels, and amino acids. This Caenorhabditis elegans protein is Sodium-coupled neutral amino acid transporter 9 homolog.